The chain runs to 341 residues: UDP-3-O-acylglucosamine N-acyltransferase (341 aa).

His236 functions as the Proton acceptor in the catalytic mechanism.

The protein belongs to the transferase hexapeptide repeat family. LpxD subfamily. As to quaternary structure, homotrimer.

It catalyses the reaction a UDP-3-O-[(3R)-3-hydroxyacyl]-alpha-D-glucosamine + a (3R)-hydroxyacyl-[ACP] = a UDP-2-N,3-O-bis[(3R)-3-hydroxyacyl]-alpha-D-glucosamine + holo-[ACP] + H(+). It functions in the pathway bacterial outer membrane biogenesis; LPS lipid A biosynthesis. Functionally, catalyzes the N-acylation of UDP-3-O-acylglucosamine using 3-hydroxyacyl-ACP as the acyl donor. Is involved in the biosynthesis of lipid A, a phosphorylated glycolipid that anchors the lipopolysaccharide to the outer membrane of the cell. The protein is UDP-3-O-acylglucosamine N-acyltransferase of Lawsonia intracellularis (strain PHE/MN1-00).